We begin with the raw amino-acid sequence, 156 residues long: Large ribosomal subunit protein uL15 (156 aa).

Positions 25–48 (RGIGCGKGKTSGRGHKGQKARSGV) are disordered. A compositionally biased stretch (basic residues) spans 34-43 (TSGRGHKGQK).

This sequence belongs to the universal ribosomal protein uL15 family. As to quaternary structure, part of the 50S ribosomal subunit.

Binds to the 23S rRNA. The polypeptide is Large ribosomal subunit protein uL15 (Wolbachia pipientis wMel).